Consider the following 429-residue polypeptide: MQRAGAGARRASDCGPAPYRPRCIAKLAQYVGSFPVDDLDTQESVGLVQQQLWALQDCSRRRAVILKFSLQGLKIYSGEGEVLLMAHALKRILYATWYPAACQFAFIARNPRSPSSKLFCHLFVGSQPGEVHILYLLLCRSFQLAYLLQHPEERAQSEPCLAPVGDLSLKPLCSPGVPPALVREPFSRDQLSQNVHALVSFRRLPAEGLLGSNGKELPESEGRGGTRHIRLGNPYCSPTLVRKKAIRSKVIRSGAYRGCTYETQLQLSAREAFPAAWEAWPRGPGGPSCLVENEGSLTENIWAFAGLSRSCALSLLRRDVHGAFLLWPEPGTSDQWSLSVRTQCGVVPHQVFRNHLGRFCLEHLPAEFPSLEALVESHAGVERSLFCPLSMGRLNPTYEEQDCGTEGRFPRTLRPLSHAKSEAELQGLG.

An SH2 domain is found at 302 to 398; it reads WAFAGLSRSC…LSMGRLNPTY (97 aa).

In terms of assembly, interacts with BCR. As to expression, highly expressed in brain, particularly in Purkinjie cells in the cerebellum and the cornu ammonis of the hippocampus.

Its subcellular location is the postsynaptic density. Its function is as follows. May be involved in synaptic plasticity regulation through the control of Rac-GTP levels. The polypeptide is SH2 domain-containing protein 5 (Mus musculus (Mouse)).